A 382-amino-acid chain; its full sequence is MSLKEKTQSLFANAFGYPATHTIQAPGRVNLIGEHTDYNDGFVLPCAIDYQTVISCAPRDDRKVRVMAADYENQLDEFSLDAPIVAHENYQWANYVRGVVKHLQLRNNSFGGVDMVISGNVPQGAGLSSSASLEVAVGTVLQQLYHLPLDGAQIALNGQEAENQFVGCNCGIMDQLISALGKKDHALLIDCRSLGTKAVSMPKGVAVVIINSNFKRTLVGSEYNTRREQCETGARFFQQPALRDVTIEEFNAVAHELDPIVAKRVRHILTENARTVEAASALEQGDLKRMGELMAESHASMRDDFEITVPQIDTLVEIVKAVIGDKGGVRMTGGGFGGCIVALIPEELVPAVQQAVAEQYEAKTGIKETFYVCKPSQGAGQC.

34-37 provides a ligand contact to substrate; the sequence is EHTD. Residue 124–130 participates in ATP binding; it reads GAGLSSS. Mg(2+) is bound by residues serine 130 and glutamate 162. Aspartate 174 (proton acceptor) is an active-site residue. Substrate is bound at residue tyrosine 223.

This sequence belongs to the GHMP kinase family. GalK subfamily.

The protein resides in the cytoplasm. The enzyme catalyses alpha-D-galactose + ATP = alpha-D-galactose 1-phosphate + ADP + H(+). It participates in carbohydrate metabolism; galactose metabolism. In terms of biological role, catalyzes the transfer of the gamma-phosphate of ATP to D-galactose to form alpha-D-galactose-1-phosphate (Gal-1-P). This Escherichia coli O157:H7 (strain EC4115 / EHEC) protein is Galactokinase.